Reading from the N-terminus, the 146-residue chain is Single-stranded DNA-binding protein, mitochondrial (146 aa).

The transit peptide at 1–16 (MLRNASAQILKQFVRH) directs the protein to the mitochondrion. Residues 29-140 (INKVQILGRV…IIADNIVFLS (112 aa)) enclose the SSB domain.

It is found in the mitochondrion. The protein resides in the mitochondrion matrix. It localises to the mitochondrion nucleoid. In terms of biological role, binds preferentially and cooperatively to pyrimidine rich single-stranded DNA (ss-DNA). May be required to maintain the copy number of mitochondrial DNA (mtDNA) and play a crucial role during mtDNA replication. Required for retinal ganglion cell differentiation and retinal integrity. In Danio rerio (Zebrafish), this protein is Single-stranded DNA-binding protein, mitochondrial.